The following is a 736-amino-acid chain: Catalase-peroxidase 2 (736 aa).

The segment at residues 91–227 is a cross-link (tryptophyl-tyrosyl-methioninium (Trp-Tyr) (with M-253)); it reads WHSAGTYRMG…LAAVQMGLIY (137 aa). His-92 (proton acceptor) is an active-site residue. The segment at residues 227 to 253 is a cross-link (tryptophyl-tyrosyl-methioninium (Tyr-Met) (with W-91)); that stretch reads YVNPEGPDGNPDPVAAAYDIREVFGRM. His-268 serves as a coordination point for heme b.

It belongs to the peroxidase family. Peroxidase/catalase subfamily. As to quaternary structure, homodimer or homotetramer. The cofactor is heme b. In terms of processing, formation of the three residue Trp-Tyr-Met cross-link is important for the catalase, but not the peroxidase activity of the enzyme.

It carries out the reaction H2O2 + AH2 = A + 2 H2O. The catalysed reaction is 2 H2O2 = O2 + 2 H2O. Bifunctional enzyme with both catalase and broad-spectrum peroxidase activity. Shows peroxidase specificity towards odianisidine, ABTS and pyrogallol, but methoxyphenol and 2-chloronaphthol are not peroxidized. This chain is Catalase-peroxidase 2, found in Burkholderia cenocepacia (strain ATCC BAA-245 / DSM 16553 / LMG 16656 / NCTC 13227 / J2315 / CF5610) (Burkholderia cepacia (strain J2315)).